A 244-amino-acid polypeptide reads, in one-letter code: Small ribosomal subunit protein eS4 (244 aa).

The S4 RNA-binding domain occupies Leu43 to Glu106.

Belongs to the eukaryotic ribosomal protein eS4 family.

The sequence is that of Small ribosomal subunit protein eS4 (rps4e) from Methanococcus vannielii.